A 594-amino-acid chain; its full sequence is AT-rich interactive domain-containing protein 5A (594 aa).

The segment at 1–56 is disordered; the sequence is MAAPVKGNRKQSTEGDALDPPASPKPAGKQNGIQNPISLEDSPEAGGEREEEQERE. The segment at 1-300 is interaction with SOX9; sequence MAAPVKGNRK…AVHLPESPQS (300 aa). The residue at position 23 (serine 23) is a Phosphoserine. Positions 55–147 constitute an ARID domain; the sequence is REEEQAFLVS…LVLPYVRHLK (93 aa). Glycyl lysine isopeptide (Lys-Gly) (interchain with G-Cter in ubiquitin) cross-links involve residues lysine 85 and lysine 94. A disordered region spans residues 146 to 223; the sequence is LKGEDDKPLP…NSTEQQGLAS (78 aa). Residues 165–189 show a composition bias toward basic and acidic residues; that stretch reads MAKENRGDDGATERPKKAKEERRMD. Serine 256 and serine 289 each carry phosphoserine. Disordered regions lie at residues 281-331 and 426-454; these read RHGA…EAQA and AESP…GAAH. Residues 297 to 306 show a composition bias toward polar residues; sequence SPQSPKGLTE. Phosphoserine is present on residues serine 438 and serine 463.

In terms of assembly, interacts with SOX9. Interacts with ESR1. Interacts with RORC. Phosphorylated by MAPK14 on serine residues involving a TLR4 signaling pathway upon lipopolysaccharide (LPS) stimulation leading to its ubiquitination and proteasomal degradation. In terms of processing, ubiquitinated leading to proteasomal degradation; involving WWP1 linked to MAPK14-mediated phosphorylation upon LPS stimulation.

The protein resides in the nucleus. In terms of biological role, DNA-binding protein that may regulate transcription and act as a repressor by binding to AT-rich stretches in the promoter region of target genes. May positively regulate chondrocyte-specific transcription such as of COL2A1 in collaboration with SOX9 and positively regulate histone H3 acetylation at chondrocyte-specific genes. May stimulate early-stage chondrocyte differentiation and inhibit later stage differention. Can repress ESR1-mediated transcriptional activation; proposed to act as corepressor for selective nuclear hormone receptors. As an RNA-binding protein, involved in the regulation of inflammatory response by stabilizing selective inflammation-related mRNAs, such as STAT3 and TBX21. Also stabilizes IL6 mRNA. Binds to stem loop structures located in the 3'UTRs of IL6, STAT3 and TBX21 mRNAs; at least for STAT3 prevents binding of ZC3H12A to the mRNA stem loop structure thus inhibiting its degradation activity. Contributes to elevated IL6 levels possibly implicated in autoimmunity processes. IL6-dependent stabilization of STAT3 mRNA may promote differentiation of naive CD4+ T-cells into T-helper Th17 cells. In CD4+ T-cells may also inhibit RORC-induced Th17 cell differentiation independently of IL6 signaling. Stabilization of TBX21 mRNA contributes to elevated interferon-gamma secretion in Th1 cells possibly implicated in the establishment of septic shock. Stabilizes TNFRSF4/OX40 mRNA by binding to the conserved stem loop structure in its 3'UTR; thereby competing with the mRNA-destabilizing functions of RC3H1 and endoribonuclease ZC3H12A. This Homo sapiens (Human) protein is AT-rich interactive domain-containing protein 5A (ARID5A).